We begin with the raw amino-acid sequence, 110 residues long: UPF0060 membrane protein Pcryo_1341 (110 aa).

4 helical membrane-spanning segments follow: residues 7 to 27 (VGLF…PYLW), 33 to 53 (SIWL…LLTL), 63 to 83 (AAYG…VDGI), and 87 to 107 (TWDI…MFAP).

This sequence belongs to the UPF0060 family.

The protein resides in the cell inner membrane. The protein is UPF0060 membrane protein Pcryo_1341 of Psychrobacter cryohalolentis (strain ATCC BAA-1226 / DSM 17306 / VKM B-2378 / K5).